We begin with the raw amino-acid sequence, 394 residues long: MSLAVRGINRNAENAAPMGKAITDGTRRPVLGEISNFANKAVQVKKNTTLKAQAVKTAKPASQQQTLPTAALHKRAPVLPVIADPPQVVSVSTDVAIKEEELCQAFSDALLAVEDIDEGDADMPQLCSEYVKDIYVYLRNLEVQQCIRPRYMQGYEINERMRALLVDWLIQVHSRFQLLQETLYMTVAILDRFLQVQPVSRRKLQLVGVTAMLVASKYEEMYAPEVGDFVYITDNAFTKAQIREMEMLILRDLNFQLGRPLPLHFLRRASKAGSADAEKHTLAKYLMELTLMDYDMLHYHPSEIAAAALCLSQLVLDGQKWSATQQHYSTYNEDHLKPIMQHMAKNVVRVNEGLTKHMAIKNKYASSRLMRISLLPQLKAAVIKDLAAPLLPQS.

This sequence belongs to the cyclin family. Cyclin AB subfamily. Interacts with the CDK1 protein kinase to form a serine/threonine kinase holoenzyme complex also known as maturation promoting factor (MPF). The cyclin subunit imparts substrate specificity to the complex.

Its function is as follows. Essential for the control of the cell cycle at the G2/M (mitosis) transition. This chain is G2/mitotic-specific cyclin-B2 (ccnb2), found in Anguilla japonica (Japanese eel).